The following is a 197-amino-acid chain: MAKQITSICSFIFGASDKKSLPDESAPEIAFAGRSNVGKSSLINLLINSKKAARVSSKPGCTRQINFYSMYNDKFRIVDLPGYGYSCASKEEAVQYLNLIEYYLIHRRNLKRVFVLIDSKVGLKEIDKDFVYWLICNNINFNIVLTKIDKVNQESLNAILENTQKWVNNEHVSIHQISIRVKHKITKVRDEFFKFTR.

The EngB-type G domain maps to 25–197 (SAPEIAFAGR…VRDEFFKFTR (173 aa)). Residues 33-40 (GRSNVGKS), 60-64 (GCTRQ), 79-82 (DLPG), 146-149 (TKID), and 177-179 (ISI) each bind GTP. Mg(2+) is bound by residues Ser-40 and Thr-62.

It belongs to the TRAFAC class TrmE-Era-EngA-EngB-Septin-like GTPase superfamily. EngB GTPase family. Requires Mg(2+) as cofactor.

In terms of biological role, necessary for normal cell division and for the maintenance of normal septation. This is Probable GTP-binding protein EngB from Wolbachia pipientis subsp. Culex pipiens (strain wPip).